A 137-amino-acid chain; its full sequence is CUB domain-containing protein (137 aa).

Positions 1 to 21 (MRLSRAFAWPLLCSIATTVKA) are cleaved as a signal peptide. 2 disulfide bridges follow: cysteine 30-cysteine 51 and cysteine 75-cysteine 96. The region spanning 30–132 (CGGHYTDEYG…TFFEIYYFVD (103 aa)) is the CUB domain.

This Homo sapiens (Human) protein is CUB domain-containing protein.